The primary structure comprises 118 residues: Aspartate 1-decarboxylase (118 aa).

Catalysis depends on Ser-25, which acts as the Schiff-base intermediate with substrate; via pyruvic acid. The residue at position 25 (Ser-25) is a Pyruvic acid (Ser). Residue Thr-57 coordinates substrate. Tyr-58 (proton donor) is an active-site residue. A substrate-binding site is contributed by 73–75 (GAA).

It belongs to the PanD family. Heterooctamer of four alpha and four beta subunits. Pyruvate serves as cofactor. Is synthesized initially as an inactive proenzyme, which is activated by self-cleavage at a specific serine bond to produce a beta-subunit with a hydroxyl group at its C-terminus and an alpha-subunit with a pyruvoyl group at its N-terminus.

It localises to the cytoplasm. The catalysed reaction is L-aspartate + H(+) = beta-alanine + CO2. It functions in the pathway cofactor biosynthesis; (R)-pantothenate biosynthesis; beta-alanine from L-aspartate: step 1/1. Functionally, catalyzes the pyruvoyl-dependent decarboxylation of aspartate to produce beta-alanine. This chain is Aspartate 1-decarboxylase, found in Hyphomonas neptunium (strain ATCC 15444).